The sequence spans 468 residues: Ribulose bisphosphate carboxylase large chain (468 aa).

Lys-7 carries the post-translational modification N6,N6,N6-trimethyllysine. The substrate site is built by Asn-116 and Thr-166. The active-site Proton acceptor is Lys-168. Lys-170 contributes to the substrate binding site. Mg(2+)-binding residues include Lys-194, Asp-196, and Glu-197. The residue at position 194 (Lys-194) is an N6-carboxylysine. His-287 (proton acceptor) is an active-site residue. Substrate-binding residues include Arg-288, His-320, and Ser-372.

Belongs to the RuBisCO large chain family. Type I subfamily. In terms of assembly, heterohexadecamer of 8 large chains and 8 small chains. It depends on Mg(2+) as a cofactor.

The protein resides in the plastid. The protein localises to the chloroplast. The enzyme catalyses 2 (2R)-3-phosphoglycerate + 2 H(+) = D-ribulose 1,5-bisphosphate + CO2 + H2O. It catalyses the reaction D-ribulose 1,5-bisphosphate + O2 = 2-phosphoglycolate + (2R)-3-phosphoglycerate + 2 H(+). Its function is as follows. RuBisCO catalyzes two reactions: the carboxylation of D-ribulose 1,5-bisphosphate, the primary event in carbon dioxide fixation, as well as the oxidative fragmentation of the pentose substrate in the photorespiration process. Both reactions occur simultaneously and in competition at the same active site. The polypeptide is Ribulose bisphosphate carboxylase large chain (Couroupita guianensis (Cannonball tree)).